A 585-amino-acid polypeptide reads, in one-letter code: Arginine--tRNA ligase (585 aa).

Positions 130 to 140 (ANPTGPMHVGH) match the 'HIGH' region motif.

It belongs to the class-I aminoacyl-tRNA synthetase family. As to quaternary structure, monomer.

Its subcellular location is the cytoplasm. The catalysed reaction is tRNA(Arg) + L-arginine + ATP = L-arginyl-tRNA(Arg) + AMP + diphosphate. This Methylorubrum extorquens (strain PA1) (Methylobacterium extorquens) protein is Arginine--tRNA ligase.